We begin with the raw amino-acid sequence, 176 residues long: MDLSESLHDFILVFLGSGLILGSLGVVFFTNTIFSAFSLGLVLVCVSLFYILSNSHFVAASQLLIYVGAINVLIIFAVMFMNGSEYDQNFRVWTVGDGITLMVCTSIFISQINTILDTSWHGIIWTTRPNQILEQDLISTSQQIGIHLSTDFFLPFELISIILLVALIGAIFVARQ.

A run of 5 helical transmembrane segments spans residues 10-30 (FILV…VFFT), 32-52 (TIFS…FYIL), 63-83 (LLIY…FMNG), 92-112 (VWTV…ISQI), and 152-172 (FFLP…GAIF).

Belongs to the complex I subunit 6 family. NDH is composed of at least 16 different subunits, 5 of which are encoded in the nucleus.

Its subcellular location is the plastid. It is found in the chloroplast thylakoid membrane. The catalysed reaction is a plastoquinone + NADH + (n+1) H(+)(in) = a plastoquinol + NAD(+) + n H(+)(out). The enzyme catalyses a plastoquinone + NADPH + (n+1) H(+)(in) = a plastoquinol + NADP(+) + n H(+)(out). Its function is as follows. NDH shuttles electrons from NAD(P)H:plastoquinone, via FMN and iron-sulfur (Fe-S) centers, to quinones in the photosynthetic chain and possibly in a chloroplast respiratory chain. The immediate electron acceptor for the enzyme in this species is believed to be plastoquinone. Couples the redox reaction to proton translocation, and thus conserves the redox energy in a proton gradient. The protein is NAD(P)H-quinone oxidoreductase subunit 6, chloroplastic (ndhG) of Phaseolus vulgaris (Kidney bean).